Here is a 362-residue protein sequence, read N- to C-terminus: Probable protein phosphatase 2C 24 (362 aa).

The 284-residue stretch at 77 to 360 (RYGVSSVCGR…DNVSVVVIDL (284 aa)) folds into the PPM-type phosphatase domain. 4 residues coordinate Mn(2+): Asp117, Gly118, Asp295, and Asp351.

It belongs to the PP2C family. Mg(2+) serves as cofactor. It depends on Mn(2+) as a cofactor.

It catalyses the reaction O-phospho-L-seryl-[protein] + H2O = L-seryl-[protein] + phosphate. The enzyme catalyses O-phospho-L-threonyl-[protein] + H2O = L-threonyl-[protein] + phosphate. This is Probable protein phosphatase 2C 24 from Arabidopsis thaliana (Mouse-ear cress).